The primary structure comprises 467 residues: 6-phosphogluconate dehydrogenase, decarboxylating (467 aa).

Residues 9–14, 32–34, 73–75, and Asn-101 contribute to the NADP(+) site; these read GLGVMG, NYT, and VTA. Substrate contacts are provided by residues Asn-101 and 127–129; that span reads SGG. Lys-181 (proton acceptor) is an active-site residue. Substrate is bound at residue 184–185; sequence HN. Glu-188 serves as the catalytic Proton donor. The substrate site is built by Tyr-189, Lys-259, Arg-286, and His-451.

The protein belongs to the 6-phosphogluconate dehydrogenase family. In terms of assembly, homodimer.

It carries out the reaction 6-phospho-D-gluconate + NADP(+) = D-ribulose 5-phosphate + CO2 + NADPH. Its pathway is carbohydrate degradation; pentose phosphate pathway; D-ribulose 5-phosphate from D-glucose 6-phosphate (oxidative stage): step 3/3. Functionally, catalyzes the oxidative decarboxylation of 6-phosphogluconate to ribulose 5-phosphate and CO(2), with concomitant reduction of NADP to NADPH. The polypeptide is 6-phosphogluconate dehydrogenase, decarboxylating (gntZ) (Bacillus licheniformis).